Here is a 511-residue protein sequence, read N- to C-terminus: Ent-copalyl diphosphate synthase (511 aa).

Residues Asp-291 and Asp-293 each contribute to the a divalent metal cation site. The short motif at 291 to 294 (DSDD) is the DXDD motif element.

Belongs to the terpene synthase family. As to quaternary structure, homodimer. It depends on a divalent metal cation as a cofactor.

The catalysed reaction is (2E,6E,10E)-geranylgeranyl diphosphate = ent-copalyl diphosphate. Its pathway is antibiotic biosynthesis. Functionally, involved in viguiepinol biosynthesis. Catalyzes the conversion of geranylgeranyl diphosphate (GGDP) into copalyl diphosphate (ent-CDP). The chain is Ent-copalyl diphosphate synthase from Streptomyces sp. (strain KO-3988).